We begin with the raw amino-acid sequence, 344 residues long: Methionine import ATP-binding protein MetN (344 aa).

One can recognise an ABC transporter domain in the interval 2-241 (IELQGLSQRF…PQHEVTRAMI (240 aa)). 38–45 (GRSGAGKS) provides a ligand contact to ATP.

This sequence belongs to the ABC transporter superfamily. Methionine importer (TC 3.A.1.24) family. As to quaternary structure, the complex is composed of two ATP-binding proteins (MetN), two transmembrane proteins (MetI) and a solute-binding protein (MetQ).

Its subcellular location is the cell inner membrane. It catalyses the reaction L-methionine(out) + ATP + H2O = L-methionine(in) + ADP + phosphate + H(+). The catalysed reaction is D-methionine(out) + ATP + H2O = D-methionine(in) + ADP + phosphate + H(+). Its function is as follows. Part of the ABC transporter complex MetNIQ involved in methionine import. Responsible for energy coupling to the transport system. In Cupriavidus pinatubonensis (strain JMP 134 / LMG 1197) (Cupriavidus necator (strain JMP 134)), this protein is Methionine import ATP-binding protein MetN.